The chain runs to 152 residues: Protein NrdI (152 aa).

This sequence belongs to the NrdI family.

Its function is as follows. Probably involved in ribonucleotide reductase function. This Mycolicibacterium vanbaalenii (strain DSM 7251 / JCM 13017 / BCRC 16820 / KCTC 9966 / NRRL B-24157 / PYR-1) (Mycobacterium vanbaalenii) protein is Protein NrdI.